Consider the following 189-residue polypeptide: GMP synthase [glutamine-hydrolyzing] subunit A (189 aa).

Positions 1 to 189 (MIVILNNGGQ…CKKCGFGFEE (189 aa)) constitute a Glutamine amidotransferase type-1 domain. C76 functions as the Nucleophile in the catalytic mechanism. Residues H163 and E165 contribute to the active site.

As to quaternary structure, heterodimer composed of a glutamine amidotransferase subunit (A) and a GMP-binding subunit (B).

The catalysed reaction is XMP + L-glutamine + ATP + H2O = GMP + L-glutamate + AMP + diphosphate + 2 H(+). It participates in purine metabolism; GMP biosynthesis; GMP from XMP (L-Gln route): step 1/1. Functionally, catalyzes the synthesis of GMP from XMP. In Methanococcus maripaludis (strain DSM 14266 / JCM 13030 / NBRC 101832 / S2 / LL), this protein is GMP synthase [glutamine-hydrolyzing] subunit A.